A 172-amino-acid chain; its full sequence is Adrenodoxin homolog, mitochondrial (172 aa).

The N-terminal 16 residues, 1–16 (MLKIVTRAGHTARISN), are a transit peptide targeting the mitochondrion. Positions 61–163 (LKITFILKDG…GIRVALPQMT (103 aa)) constitute a 2Fe-2S ferredoxin-type domain. Cysteine 98, cysteine 104, cysteine 107, and cysteine 144 together coordinate [2Fe-2S] cluster.

It belongs to the adrenodoxin/putidaredoxin family. In terms of assembly, interacts in its reduced state with the apo form of ISU1. The cofactor is [2Fe-2S] cluster.

It localises to the mitochondrion matrix. In terms of biological role, iron-sulfur protein that transfers electrons in a wide variety of metabolic reactions. Involved in heme A biosynthesis and in iron-sulfur cluster assembly. Transfers electrons from adrenodoxin reductase ARH1 to heme A synthase COX15, a heme protein that catalyzes the conversion of heme O to heme A. Required for the de novo synthesis of Fe-S clusters on iron sulfur cluster assembly protein ISU1. Interact in its reduced state with ISU1 to productively deliver electrons for Fe-S cluster synthesis. Essential for coenzyme Q biosynthesis. May transfer the electrons required for the hydroxylation reaction performed by COQ6. This is Adrenodoxin homolog, mitochondrial from Saccharomyces cerevisiae (strain ATCC 204508 / S288c) (Baker's yeast).